The primary structure comprises 438 residues: 3-phosphoshikimate 1-carboxyvinyltransferase (438 aa).

Lys-26, Ser-27, and Arg-31 together coordinate 3-phosphoshikimate. Lys-26 contacts phosphoenolpyruvate. Positions 99 and 127 each coordinate phosphoenolpyruvate. Residues Ser-172, Gln-174, Asp-320, and Lys-347 each contribute to the 3-phosphoshikimate site. Gln-174 lines the phosphoenolpyruvate pocket. Residue Asp-320 is the Proton acceptor of the active site. 2 residues coordinate phosphoenolpyruvate: Arg-351 and Arg-392.

The protein belongs to the EPSP synthase family. As to quaternary structure, monomer.

It localises to the cytoplasm. The enzyme catalyses 3-phosphoshikimate + phosphoenolpyruvate = 5-O-(1-carboxyvinyl)-3-phosphoshikimate + phosphate. The protein operates within metabolic intermediate biosynthesis; chorismate biosynthesis; chorismate from D-erythrose 4-phosphate and phosphoenolpyruvate: step 6/7. Functionally, catalyzes the transfer of the enolpyruvyl moiety of phosphoenolpyruvate (PEP) to the 5-hydroxyl of shikimate-3-phosphate (S3P) to produce enolpyruvyl shikimate-3-phosphate and inorganic phosphate. In Xanthomonas campestris pv. campestris (strain B100), this protein is 3-phosphoshikimate 1-carboxyvinyltransferase.